We begin with the raw amino-acid sequence, 610 residues long: Elongation factor 4 (610 aa).

The tr-type G domain maps to 11 to 193 (EKIRNFSIIA…QIVEKVPAPT (183 aa)). Residues 23–28 (DHGKST) and 140–143 (NKID) each bind GTP.

This sequence belongs to the TRAFAC class translation factor GTPase superfamily. Classic translation factor GTPase family. LepA subfamily.

Its subcellular location is the cell membrane. The enzyme catalyses GTP + H2O = GDP + phosphate + H(+). In terms of biological role, required for accurate and efficient protein synthesis under certain stress conditions. May act as a fidelity factor of the translation reaction, by catalyzing a one-codon backward translocation of tRNAs on improperly translocated ribosomes. Back-translocation proceeds from a post-translocation (POST) complex to a pre-translocation (PRE) complex, thus giving elongation factor G a second chance to translocate the tRNAs correctly. Binds to ribosomes in a GTP-dependent manner. This is Elongation factor 4 from Streptococcus pyogenes serotype M6 (strain ATCC BAA-946 / MGAS10394).